The sequence spans 209 residues: GTP cyclohydrolase-2 (209 aa).

GTP is bound at residue 49–53 (RIHSE). Positions 54, 65, and 67 each coordinate Zn(2+). Residues Gln70, 92 to 94 (EGR), and Thr114 each bind GTP. Catalysis depends on Asp126, which acts as the Proton acceptor. Arg128 serves as the catalytic Nucleophile. Positions 149 and 154 each coordinate GTP.

This sequence belongs to the GTP cyclohydrolase II family. Requires Zn(2+) as cofactor.

It catalyses the reaction GTP + 4 H2O = 2,5-diamino-6-hydroxy-4-(5-phosphoribosylamino)-pyrimidine + formate + 2 phosphate + 3 H(+). Its pathway is cofactor biosynthesis; riboflavin biosynthesis; 5-amino-6-(D-ribitylamino)uracil from GTP: step 1/4. Its function is as follows. Catalyzes the conversion of GTP to 2,5-diamino-6-ribosylamino-4(3H)-pyrimidinone 5'-phosphate (DARP), formate and pyrophosphate. In Shewanella pealeana (strain ATCC 700345 / ANG-SQ1), this protein is GTP cyclohydrolase-2.